A 55-amino-acid polypeptide reads, in one-letter code: Neurotoxin B-IV (55 aa).

At proline 10 the chain carries Hydroxyproline. Cystine bridges form between cysteine 12/cysteine 52, cysteine 16/cysteine 48, cysteine 23/cysteine 41, and cysteine 26/cysteine 37.

The protein belongs to the worm B-toxin family.

Its subcellular location is the secreted. In terms of biological role, this toxin increases the excitability of nerves by delaying the inactivation of the voltage-gated sodium channel (Nav). Only acts on some crustacean. Is more abundant, but 15-fold less toxic than neurotoxin B-II. The sequence is that of Neurotoxin B-IV from Cerebratulus lacteus (Milky ribbon worm).